The primary structure comprises 254 residues: tRNA (guanine-N(7)-)-methyltransferase (254 aa).

Residues 1 to 34 form a disordered region; it reads MNTNTPAHPPEGAPLSEATQAALASAEHAPDSPG. Residues Glu87, Glu112, Asp139, and Asp162 each contribute to the S-adenosyl-L-methionine site. Asp162 is a catalytic residue. Substrate is bound by residues Lys166, Asp198, and 233–236; that span reads TKFE.

Belongs to the class I-like SAM-binding methyltransferase superfamily. TrmB family.

It carries out the reaction guanosine(46) in tRNA + S-adenosyl-L-methionine = N(7)-methylguanosine(46) in tRNA + S-adenosyl-L-homocysteine. It functions in the pathway tRNA modification; N(7)-methylguanine-tRNA biosynthesis. In terms of biological role, catalyzes the formation of N(7)-methylguanine at position 46 (m7G46) in tRNA. This Bordetella pertussis (strain Tohama I / ATCC BAA-589 / NCTC 13251) protein is tRNA (guanine-N(7)-)-methyltransferase.